The sequence spans 339 residues: MSGQLERCEREWHELEGEFQELQETHRIYKQKLEELTSLQTLCSTSISKQKRHLKDLKHTLQRYKRHSSHEEAALIQQMTANIKERQNVFFDMEAYLPKKNGLYLNLVLGNVSVTLLSNQAKFAYKDEYEKFKLYLTIILLLGAVACRFVLHYRVTDEVFNFLLVWYYCTLTIRESILISNGSRIKGWWVSHHYVSTFLSGVMLTWPNGLIYQKFRNQFLAFSIFQSCVQFLQYYYQRGCLYRLRALGERNHLDLTVEGFQSWMWRGLTFLLPFLFCGHFWQLYNAVTLFELSTHEECKEWQVFVLALTFLILFLGNFLTTLKVVHAKLHKNRNKTKQP.

A coiled-coil region spans residues 1 to 67; it reads MSGQLERCER…KHTLQRYKRH (67 aa). The next 6 membrane-spanning stretches (helical) occupy residues 102–124, 132–152, 159–179, 187–207, 270–290, and 302–322; these read GLYL…AKFA, FKLY…FVLH, VFNF…SILI, GWWV…LTWP, FLLP…VTLF, and QVFV…LTTL.

Belongs to the TMEM120 family. In terms of assembly, heterooligomer with TMEM120A. As to expression, expressed in inguinal and subcutaneous white adipose tissue and in brown adipose tissue.

It is found in the nucleus inner membrane. Functionally, necessary for efficient adipogenesis. Does not show ion channel activity. This is Transmembrane protein 120B from Mus musculus (Mouse).